Here is a 78-residue protein sequence, read N- to C-terminus: NEDD8-like protein RUB3 (78 aa).

Residue Gly76 forms a Glycyl lysine isopeptide (Gly-Lys) (interchain with K-? in acceptor proteins) linkage. The propeptide occupies 77-78; the sequence is CC.

As to expression, detected in stems and flower buds, but not in leaves, mature flowers and seedlings.

May function as a stable post-translational protein modifier. The polypeptide is NEDD8-like protein RUB3 (RUB3) (Arabidopsis thaliana (Mouse-ear cress)).